The chain runs to 48 residues: Photosystem II reaction center protein K (48 aa).

Residues 1 to 11 constitute a propeptide that is removed on maturation; sequence MFLFNLEQSIG. A helical transmembrane segment spans residues 23–43; the sequence is LVDVLPIIPLLFLLLAFVWQA.

Belongs to the PsbK family. PSII is composed of 1 copy each of membrane proteins PsbA, PsbB, PsbC, PsbD, PsbE, PsbF, PsbH, PsbI, PsbJ, PsbK, PsbL, PsbM, PsbT, PsbX, PsbY, PsbZ, Psb30/Ycf12, at least 3 peripheral proteins of the oxygen-evolving complex and a large number of cofactors. It forms dimeric complexes.

The protein resides in the plastid. It localises to the chloroplast thylakoid membrane. Functionally, one of the components of the core complex of photosystem II (PSII). PSII is a light-driven water:plastoquinone oxidoreductase that uses light energy to abstract electrons from H(2)O, generating O(2) and a proton gradient subsequently used for ATP formation. It consists of a core antenna complex that captures photons, and an electron transfer chain that converts photonic excitation into a charge separation. The polypeptide is Photosystem II reaction center protein K (Lepocinclis buetschlii).